Here is a 415-residue protein sequence, read N- to C-terminus: Nacrein-like protein C2 (415 aa).

N-linked (GlcNAc...) asparagine glycosylation is present at Asn27. Residues 33–414 (AGFSYDRSIC…KNKVTVYKSF (382 aa)) enclose the Alpha-carbonic anhydrase domain. Residues His132, His134, and His157 each contribute to the Zn(2+) site. The segment at 201–297 (DEPDDEECKH…GENGHKHGCR (97 aa)) is disordered. Residues 207 to 219 (ECKHILKGHHPDN) are compositionally biased toward basic and acidic residues. Positions 220–289 (NENGNGDNGN…NNGENGNNGE (70 aa)) are enriched in low complexity. 22 tandem repeats follow at residues 225–227 (GDN), 228–230 (GNN), 231–233 (GYN), 234–236 (GDN), 237–239 (GNN), 240–242 (GDN), 243–245 (GNN), 246–248 (GYN), 249–251 (GDN), 252–254 (GNN), 255–257 (GVN), 258–260 (GNN), 261–263 (GYN), 264–266 (GDN), 267–269 (GNN), 270–272 (GDN), 273–275 (GNN), 276–278 (GEN), 279–281 (GNN), 282–284 (GEN), 285–286 (GN), and 288–290 (GEN). The 27 X 3 AA approximate tandem repeats of G-X-N stretch occupies residues 225–290 (GDNGNNGYNG…NGENGNNGEN (66 aa)). Residue 355 to 356 (TT) coordinates substrate.

The protein belongs to the alpha-carbonic anhydrase family. In terms of assembly, homooligomer; disulfide-linked. May also be disulfide-linked to insoluble organic matrix. It depends on Zn(2+) as a cofactor. As to expression, expressed in the mantle.

It is found in the secreted. It localises to the extracellular space. The protein localises to the extracellular matrix. The catalysed reaction is hydrogencarbonate + H(+) = CO2 + H2O. In terms of biological role, acts as a negative regulator for calcification in the shells of mollusks. May function both as a calcium concentrator and as a carbonic anhydrase required for production of carbonate ions, which are assembled to CaCO(3) at mineralization sites. Is important for shell formation in both the calcitic prismatic layer and the aragonitic nacreous layer. Shows inhibitory activity of crystal formation when present in free state but, when attached to the insoluble matrix, may regulate the form and size of aragonite crystal. This is Nacrein-like protein C2 from Crassostrea nippona (Iwagaki oyster).